The following is a 245-amino-acid chain: Uroporphyrinogen-III C-methyltransferase (245 aa).

Residues Pro12, 87-89, 117-118, Met168, Ala197, and Ala225 contribute to the S-adenosyl-L-homocysteine site; these read GGD and TA.

The protein belongs to the precorrin methyltransferase family.

It catalyses the reaction uroporphyrinogen III + 2 S-adenosyl-L-methionine = precorrin-2 + 2 S-adenosyl-L-homocysteine + H(+). It participates in cofactor biosynthesis; adenosylcobalamin biosynthesis; precorrin-2 from uroporphyrinogen III: step 1/1. It functions in the pathway porphyrin-containing compound metabolism; siroheme biosynthesis; precorrin-2 from uroporphyrinogen III: step 1/1. In terms of biological role, catalyzes the two successive C-2 and C-7 methylation reactions involved in the conversion of uroporphyrinogen III to precorrin-2 via the intermediate formation of precorrin-1. It is a step in the biosynthesis of both cobalamin (vitamin B12) and siroheme. The chain is Uroporphyrinogen-III C-methyltransferase (cobA) from Pseudomonas aeruginosa (strain ATCC 15692 / DSM 22644 / CIP 104116 / JCM 14847 / LMG 12228 / 1C / PRS 101 / PAO1).